Reading from the N-terminus, the 214-residue chain is GTP cyclohydrolase 1 (214 aa).

Residues Cys101, His104, and Cys172 each coordinate Zn(2+).

This sequence belongs to the GTP cyclohydrolase I family. Toroid-shaped homodecamer, composed of two pentamers of five dimers.

The enzyme catalyses GTP + H2O = 7,8-dihydroneopterin 3'-triphosphate + formate + H(+). It participates in cofactor biosynthesis; 7,8-dihydroneopterin triphosphate biosynthesis; 7,8-dihydroneopterin triphosphate from GTP: step 1/1. This chain is GTP cyclohydrolase 1, found in Gloeobacter violaceus (strain ATCC 29082 / PCC 7421).